Reading from the N-terminus, the 257-residue chain is LexA repressor (257 aa).

A DNA-binding region (H-T-H motif) is located at residues 64 to 84 (FREIGEAAGLKSPSSVKHQLQ). Active-site for autocatalytic cleavage activity residues include Ser181 and Lys218.

Belongs to the peptidase S24 family. Homodimer.

The catalysed reaction is Hydrolysis of Ala-|-Gly bond in repressor LexA.. Functionally, represses a number of genes involved in the response to DNA damage (SOS response), including recA and lexA. In the presence of single-stranded DNA, RecA interacts with LexA causing an autocatalytic cleavage which disrupts the DNA-binding part of LexA, leading to derepression of the SOS regulon and eventually DNA repair. The chain is LexA repressor from Bifidobacterium adolescentis (strain ATCC 15703 / DSM 20083 / NCTC 11814 / E194a).